The sequence spans 156 residues: Arginine repressor (156 aa).

Belongs to the ArgR family.

It is found in the cytoplasm. It participates in amino-acid biosynthesis; L-arginine biosynthesis [regulation]. In terms of biological role, regulates arginine biosynthesis genes. This Shigella boydii serotype 18 (strain CDC 3083-94 / BS512) protein is Arginine repressor.